The sequence spans 89 residues: Small ribosomal subunit protein uS15 (89 aa).

This sequence belongs to the universal ribosomal protein uS15 family. As to quaternary structure, part of the 30S ribosomal subunit. Forms a bridge to the 50S subunit in the 70S ribosome, contacting the 23S rRNA.

One of the primary rRNA binding proteins, it binds directly to 16S rRNA where it helps nucleate assembly of the platform of the 30S subunit by binding and bridging several RNA helices of the 16S rRNA. Functionally, forms an intersubunit bridge (bridge B4) with the 23S rRNA of the 50S subunit in the ribosome. This Bacillus anthracis (strain CDC 684 / NRRL 3495) protein is Small ribosomal subunit protein uS15.